The chain runs to 147 residues: MAPKKKVTGLIKLQIEAGAANPAPPVGPALGAHGVNIMEFCKAYNAATESQRGNVVPVEITVYEDRSFDFKLKTPPAAKLLLKAAGIKKGSGVPHTDKVGSVTWDQCKEIAQTKFEDLNARDIENGARIIAGTARSMGITVDGVPAK.

It belongs to the universal ribosomal protein uL11 family. Part of the ribosomal stalk of the 50S ribosomal subunit. Interacts with L10 and the large rRNA to form the base of the stalk. L10 forms an elongated spine to which L12 dimers bind in a sequential fashion forming a multimeric L10(L12)X complex. In terms of processing, one or more lysine residues are methylated.

Forms part of the ribosomal stalk which helps the ribosome interact with GTP-bound translation factors. The polypeptide is Large ribosomal subunit protein uL11 (Corynebacterium aurimucosum (strain ATCC 700975 / DSM 44827 / CIP 107346 / CN-1) (Corynebacterium nigricans)).